The sequence spans 246 residues: Phosducin (246 aa).

A compositionally biased stretch (acidic residues) spans 1 to 14 (MEEAKSQSLEEDFE). The interval 1 to 70 (MEEAKSQSLE…GKDSKERVSR (70 aa)) is disordered. Positions 1 to 244 (MEEAKSQSLE…LEHTKIEEED (244 aa)) constitute a Phosducin domain. Basic and acidic residues predominate over residues 60 to 69 (NGKDSKERVS). Ser73 bears the Phosphoserine; by PKA mark. Positions 111-246 (YGFVYELETG…HTKIEEEDVE (136 aa)) are thioredoxin fold.

Belongs to the phosducin family. As to quaternary structure, forms a complex with the beta and gamma subunits of the GTP-binding protein, transducin. Interacts with CRX. In terms of processing, light-induced changes in cyclic nucleotide levels modulate the phosphorylation of this protein by cAMP kinase.

It is found in the cytoplasm. The protein localises to the cytosol. Its subcellular location is the nucleus. The protein resides in the cell projection. It localises to the cilium. It is found in the photoreceptor outer segment. The protein localises to the photoreceptor inner segment. Functionally, may participate in the regulation of visual phototransduction or in the integration of photoreceptor metabolism. Inhibits the transcriptional activation activity of the cone-rod homeobox CRX. This chain is Phosducin (PDC), found in Homo sapiens (Human).